We begin with the raw amino-acid sequence, 89 residues long: uncharacterized protein (89 aa).

Residues Arg-66–Asp-89 form a disordered region.

This is an uncharacterized protein from Cestrum parqui (CmYLCV).